The following is a 938-amino-acid chain: Breast cancer type 2 susceptibility protein homolog (938 aa).

Basic and acidic residues-rich tracts occupy residues 320 to 339 (LEPSFQKEQKSSKDSNESKI) and 409 to 425 (NSIKRTDEEQPEKETPN). Disordered stretches follow at residues 320–359 (LEPSFQKEQKSSKDSNESKIRAPSKPSCDITEKNEGTTVL) and 409–434 (NSIKRTDEEQPEKETPNKSRSTSSHQ). BRCA2 repeat units follow at residues 537-571 (AEPEFCGFRTASNKAIPISEKMKIKTAEFMAEFQY), 638-672 (NEPQFFGFRTASKKAIEITEAMEKRGAMFLAQSRA), and 713-747 (SETEFFGFRTASNKGIVISENTKMKVAQFMSEFQA). The segment covering 870-879 (SSTETSTSCA) has biased composition (polar residues). Residues 870-938 (SSTETSTSCA…RRLGLSRSRY (69 aa)) form a disordered region. A compositionally biased stretch (basic and acidic residues) spans 898 to 915 (ADRDLNRSKDCAKNRQDA). Basic residues predominate over residues 926–938 (KKSRRLGLSRSRY).

In terms of assembly, interacts with Rad9 and spn-A/Rad51.

The protein localises to the nucleus. Functionally, involved in and required for double-strand break repair by meiotic and mitotic homologous recombination. During meiosis, has a dual role in the repair of meiotic double-stranded breaks and the efficient activation of the meiotic recombination checkpoint. The protein is Breast cancer type 2 susceptibility protein homolog of Drosophila sechellia (Fruit fly).